The following is a 394-amino-acid chain: D-mannose isomerase (394 aa).

Residues His251 and His380 each act as proton donor/acceptor in the active site.

The protein belongs to the N-acylglucosamine 2-epimerase family. As to quaternary structure, monomer.

The enzyme catalyses D-mannose = D-fructose. It catalyses the reaction D-lyxose = D-xylulose. Catalyzes the reversible isomerization of D-mannose to D-fructose. Can also isomerize D-lyxose, with lower efficiency. In longer reaction with a higher concentration of enzyme, it can isomerize 4-OH D-mannose derivatives (D-talose and 4-O-monosaccharyl-D-mannose). Cannot use D-glucose. The chain is D-mannose isomerase from Marinomonas mediterranea (strain ATCC 700492 / JCM 21426 / NBRC 103028 / MMB-1).